The following is a 376-amino-acid chain: MKILVDENIPYAHKIFSRLGDVQIIHGRKITAQIVSSYDALIVRSVTNVNQSLLEGSKVRFVGSTTSGIDHIDDHWLEKSGIKFSYAAGCNAIAVVEYVFTALLLLSQRYGFHLRDKTVGIIGVGNIGRLLYQRLNAFGVPTLLCDPPQAEISTIGEWQLLEKLVTEADVLTLHTPLTYHGRHATWHLINEDLLSALPSTKRILINTCRGAVVDNVALLHALKKGKLLSVILDVWEKEPNLSLSLLNNVDIGTAHIAGYSLEGKVRGAIKIFNDYSKFLGAIQSLNVSAFLPAPMIEYVRWHGVINEEELRKLAYLIYDLQFDDILLRRNIHKPHGFDQLRTNYCERREWSSLSVGTDNNISTNMLNQLGFKSILI.

Substrate is bound by residues Ser-45 and Thr-66. Residues Asp-146 and Thr-175 each contribute to the NAD(+) site. Arg-209 is an active-site residue. Asp-233 provides a ligand contact to NAD(+). The active site involves Glu-238. The active-site Proton donor is the His-255. Residue Gly-258 participates in NAD(+) binding. Tyr-259 lines the substrate pocket.

This sequence belongs to the D-isomer specific 2-hydroxyacid dehydrogenase family. PdxB subfamily. In terms of assembly, homodimer.

The protein resides in the cytoplasm. The catalysed reaction is 4-phospho-D-erythronate + NAD(+) = (R)-3-hydroxy-2-oxo-4-phosphooxybutanoate + NADH + H(+). It functions in the pathway cofactor biosynthesis; pyridoxine 5'-phosphate biosynthesis; pyridoxine 5'-phosphate from D-erythrose 4-phosphate: step 2/5. Catalyzes the oxidation of erythronate-4-phosphate to 3-hydroxy-2-oxo-4-phosphonooxybutanoate. This is Erythronate-4-phosphate dehydrogenase from Baumannia cicadellinicola subsp. Homalodisca coagulata.